A 239-amino-acid chain; its full sequence is Small ribosomal subunit protein uS2 (239 aa).

Belongs to the universal ribosomal protein uS2 family.

This chain is Small ribosomal subunit protein uS2, found in Francisella tularensis subsp. tularensis (strain WY96-3418).